Here is a 2188-residue protein sequence, read N- to C-terminus: Phenolphthiocerol/phthiocerol polyketide synthase subunit C (2188 aa).

A Ketosynthase family 3 (KS3) domain is found at 34 to 462 (SEPIAVIGMG…GTNAHVVIEQ (429 aa)). Residues C210, H345, and H384 each act as for beta-ketoacyl synthase activity in the active site. Positions 572 to 890 (VFVYSGRGSQ…NLNTTHTTHP (319 aa)) are acyltransferase. S660 (for malonyltransferase activity) is an active-site residue. The segment at 928–1050 (HPLLGVGVTD…ATVARAEPLA (123 aa)) is N-terminal hotdog fold. A dehydratase region spans residues 928-1093 (HPLLGVGVTD…QQHGPAFQGI (166 aa)). The PKS/mFAS DH domain occupies 928-1223 (HPLLGVGVTD…MAVLGSGSGA (296 aa)). The active-site Proton acceptor; for dehydratase activity is H959. The tract at residues 1067–1223 (EDQLDPDDLY…MAVLGSGSGA (157 aa)) is C-terminal hotdog fold. D1129 functions as the Proton donor; for dehydratase activity in the catalytic mechanism. The enoylreductase stretch occupies residues 1467–1778 (GRLDALNVHE…SGKHTGKIVI (312 aa)). The tract at residues 1802–1981 (GGYLIVGGMG…GINWGPWADV (180 aa)) is beta-ketoacyl reductase. 1803–1848 (GYLIVGGMGGLGFVVARWLAEQGAGLIVLNGRSAPSDEVAAAIAEL) provides a ligand contact to NADP(+). Positions 2069-2145 (ERPGHLASAI…DLATALCERM (77 aa)) constitute a Carrier domain. S2105 is subject to O-(pantetheine 4'-phosphoryl)serine.

Homodimer. It depends on NADP(+) as a cofactor. Requires pantetheine 4'-phosphate as cofactor.

The enzyme catalyses icosanoyl-[(phenol)carboxyphthiodiolenone synthase] + 2 (S)-methylmalonyl-CoA + 3 malonyl-CoA + 5 NADPH + 10 H(+) = C32-carboxyphthiodiolenone-[(phenol)carboxyphthiodiolenone synthase] + 5 CO2 + 5 NADP(+) + 5 CoA + 2 H2O. It catalyses the reaction docosanoyl-[(phenol)carboxyphthiodiolenone synthase] + 2 (S)-methylmalonyl-CoA + 3 malonyl-CoA + 5 NADPH + 10 H(+) = C34-carboxyphthiodiolenone-[(phenol)carboxyphthiodiolenone synthase] + 5 CO2 + 5 NADP(+) + 5 CoA + 2 H2O. It carries out the reaction 17-(4-hydroxyphenyl)heptadecanoyl-[(phenol)carboxyphthiodiolenone synthase] + 2 (S)-methylmalonyl-CoA + 3 malonyl-CoA + 5 NADPH + 10 H(+) = C35-(phenol)carboxyphthiodiolenone-[(phenol)carboxyphthiodiolenone synthase] + 5 CO2 + 5 NADP(+) + 5 CoA + 2 H2O. The catalysed reaction is 19-(4-hydroxyphenyl)nonadecanoyl-[(phenol)carboxyphthiodiolenone synthase] + 2 (S)-methylmalonyl-CoA + 3 malonyl-CoA + 5 NADPH + 10 H(+) = C37-(phenol)carboxyphthiodiolenone-[(phenol)carboxyphthiodiolenone synthase] + 5 CO2 + 5 NADP(+) + 5 CoA + 2 H2O. It participates in lipid metabolism; fatty acid biosynthesis. In terms of biological role, part of the PpsABCDE complex involved in the biosynthesis of the lipid core common to phthiocerols and phenolphthiocerols by successive additions of malonyl-CoA or methylmalonyl-CoA extender units. PpsA can accept as substrate the activated forms of either icosanoyl (C20), docosanoyl (C22) or lignoceroyl (C24) groups from FadD26, or a (4-hydroxyphenyl)-C17 or (4-hydroxyphenyl)-C19 fatty acyl from FadD29. PpsA initiates the biosynthesis and extends its substrate using a malonyl-CoA extender unit. The PpsB and PpsC proteins add the second and third malonyl-CoA extender units. PpsD adds an (R)-methylmalonyl unit and PpsE adds a second (R)-methylmalonyl unit. The incorporation of the methylmalonyl units results in formation of two branched methyl groups in the elongated product. This Mycobacterium bovis (strain ATCC BAA-935 / AF2122/97) protein is Phenolphthiocerol/phthiocerol polyketide synthase subunit C (ppsC).